The primary structure comprises 421 residues: MSGLPDHLRRPVRGMRDWLPHQYYALQQLEALLSRVAESFGYRRVETPVVEHFEVLARKAGQEIVNEIYYFRDKAGRELGLRFDMTVPIARVVSYNLDLPRPIRWYYFTKVFRYDEPQHGRYREFYQFGVELIGSASPRADAEVVHLLAESLAAAGASNYVIKLNDRRVVDKLLEGMGLAAYKDVVYKALDKRYKAPREEVVGIMTRGGVPPSKAEELYEKATEMPLQEAVDFVTRIDKELGGFYAAFVKYLEAAVGLERLIFDLSIVRGLDYYTGVVFEAFAGEYKLAVGGGGRYDDLLQLYSGVKTPALGFAIGVERLMEAVGLQAVEKPLDYYIYIFDESAYQTAIYIARELRRKGYSAVVELGDKGLKDAFEYVLKIGTRFLVILGKKELEKGVVKVRDLQKREEVEKPIDEFIRGA.

The protein belongs to the class-II aminoacyl-tRNA synthetase family.

Its subcellular location is the cytoplasm. It catalyses the reaction tRNA(His) + L-histidine + ATP = L-histidyl-tRNA(His) + AMP + diphosphate + H(+). This Pyrobaculum calidifontis (strain DSM 21063 / JCM 11548 / VA1) protein is Histidine--tRNA ligase.